Consider the following 197-residue polypeptide: Thymidylate kinase (197 aa).

7 to 14 serves as a coordination point for ATP; sequence GIDGSGKS.

The protein belongs to the thymidylate kinase family.

The enzyme catalyses dTMP + ATP = dTDP + ADP. Functionally, phosphorylation of dTMP to form dTDP in both de novo and salvage pathways of dTTP synthesis. This chain is Thymidylate kinase, found in Thermotoga petrophila (strain ATCC BAA-488 / DSM 13995 / JCM 10881 / RKU-1).